A 172-amino-acid chain; its full sequence is uncharacterized protein (172 aa).

Positions 3 to 171 (KKVAIILTNE…FNREIVNQLN (169 aa)) constitute a PfpI endopeptidase domain.

The protein belongs to the peptidase C56 family.

This is an uncharacterized protein from Staphylococcus saprophyticus subsp. saprophyticus (strain ATCC 15305 / DSM 20229 / NCIMB 8711 / NCTC 7292 / S-41).